Here is a 381-residue protein sequence, read N- to C-terminus: Lipid-A-disaccharide synthase (381 aa).

This sequence belongs to the LpxB family.

It catalyses the reaction a lipid X + a UDP-2-N,3-O-bis[(3R)-3-hydroxyacyl]-alpha-D-glucosamine = a lipid A disaccharide + UDP + H(+). It functions in the pathway bacterial outer membrane biogenesis; LPS lipid A biosynthesis. Condensation of UDP-2,3-diacylglucosamine and 2,3-diacylglucosamine-1-phosphate to form lipid A disaccharide, a precursor of lipid A, a phosphorylated glycolipid that anchors the lipopolysaccharide to the outer membrane of the cell. This chain is Lipid-A-disaccharide synthase, found in Solibacter usitatus (strain Ellin6076).